The following is a 376-amino-acid chain: S-adenosylmethionine synthase (376 aa).

H14 is a binding site for ATP. D16 is a binding site for Mg(2+). E42 contributes to the K(+) binding site. The L-methionine site is built by E55 and Q98. Residues 98-108 (QSPEIALGISS) are flexible loop. ATP is bound by residues 158 to 160 (DGK), 224 to 225 (RF), D233, 239 to 240 (RK), A256, and K260. L-methionine is bound at residue D233. K264 lines the L-methionine pocket.

Belongs to the AdoMet synthase family. As to quaternary structure, homotetramer; dimer of dimers. Mg(2+) is required as a cofactor. Requires K(+) as cofactor.

The protein localises to the cytoplasm. The catalysed reaction is L-methionine + ATP + H2O = S-adenosyl-L-methionine + phosphate + diphosphate. Its pathway is amino-acid biosynthesis; S-adenosyl-L-methionine biosynthesis; S-adenosyl-L-methionine from L-methionine: step 1/1. Catalyzes the formation of S-adenosylmethionine (AdoMet) from methionine and ATP. The overall synthetic reaction is composed of two sequential steps, AdoMet formation and the subsequent tripolyphosphate hydrolysis which occurs prior to release of AdoMet from the enzyme. The chain is S-adenosylmethionine synthase from Aquifex aeolicus (strain VF5).